The chain runs to 1359 residues: Nuclear protein STH1/NPS1 (1359 aa).

Phosphoserine is present on S38. Positions 307–383 constitute an HSA domain; it reads LERQQLLEKR…AKQRLAALKS (77 aa). Residues 482–647 form the Helicase ATP-binding domain; that stretch reads VSLYNNHLNG…WALLNFVLPK (166 aa). Residue 495 to 502 coordinates ATP; sequence DEMGLGKT. The short motif at 597–600 is the DEGH box element; that stretch reads DEGH. In terms of domain architecture, Helicase C-terminal spans 795–956; it reads LLDRVLPKFK…NKSTAEEQEA (162 aa). The interval 1090–1246 is disordered; sequence RERRRLRQNG…TAAKKTKTKS (157 aa). Residues 1108–1126 are compositionally biased toward polar residues; sequence LENTPEASETSLIENNSFT. Basic residues-rich tracts occupy residues 1143–1154 and 1198–1210; these read RSKRRSSRKKRT and KKKK…KIKL. The segment covering 1219 to 1232 has biased composition (basic and acidic residues); it reads NDGKRAEEKPESKS. Basic residues predominate over residues 1233 to 1246; the sequence is PAKKTAAKKTKTKS. In terms of domain architecture, Bromo spans 1257–1357; that stretch reads KLVEEMREQL…EFTDEWFKEH (101 aa).

Belongs to the SNF2/RAD54 helicase family. In terms of assembly, interacts directly with SFH1, CSE4, histones H3, H4 and H2B, and via its N-terminus, with RSC8. Interacts with LDB7, NPL6 and RTT102. Component of the two forms of the RSC complex composed of at least either RSC1 or RSC2, and ARP7, ARP9, LDB7, NPL6, RSC3, RSC30, RSC4, RSC58, RSC6, RSC8, RSC9, SFH1, STH1, HTL1 and probably RTT102. The complexes interact with histone and histone variant components of centromeric chromatin.

Its subcellular location is the nucleus. The catalysed reaction is ATP + H2O = ADP + phosphate + H(+). Functionally, catalytic component of the chromatin structure-remodeling complex (RSC), which is involved in transcription regulation and nucleosome positioning. RSC is responsible for the transfer of a histone octamer from a nucleosome core particle to naked DNA. The reaction requires ATP and involves an activated RSC-nucleosome intermediate. Remodeling reaction also involves DNA translocation, DNA twist and conformational change. As a reconfigurer of centromeric and flanking nucleosomes, RSC complex is required both for proper kinetochore function in chromosome segregation and, via a PKC1-dependent signaling pathway, for organization of the cellular cytoskeleton. This subunit is the essential ATPase of the complex. It is a DNA translocase capable of nucleosome remodeling. Required for full expression of early meiotic genes. Essential for mitotic growth and repression of CHA1 expression. Also involved in G2 phase control. In Saccharomyces cerevisiae (strain ATCC 204508 / S288c) (Baker's yeast), this protein is Nuclear protein STH1/NPS1 (STH1).